Reading from the N-terminus, the 229-residue chain is Adenylate kinase 1 (229 aa).

Position 42–47 (42–47 (GCGKGT)) interacts with ATP. Ser-62 is subject to Phosphoserine. AMP contacts are provided by residues Ser-63, Arg-68, 118 to 121 (GYPR), and Gln-125. Arg-156 provides a ligand contact to ATP. AMP-binding residues include Arg-164 and Arg-175.

The protein belongs to the adenylate kinase family. AK1 subfamily. In terms of tissue distribution, high expression levels in the thorax, suggesting a possible function in the gastrointestinal or reproductive systems.

Its subcellular location is the cytoplasm. It catalyses the reaction AMP + ATP = 2 ADP. Catalyzes the reversible transfer of the terminal phosphate group between ATP and AMP. Plays an important role in cellular energy homeostasis and in adenine nucleotide metabolism. In Drosophila melanogaster (Fruit fly), this protein is Adenylate kinase 1.